The following is a 392-amino-acid chain: MKKVILVRYGEILLKGLNRPIFEDKLMSNIKRAIHKLGKVRITKSQARIYIEPLEENYDFDEALKLLSKVFGIVSVSPVWKIDSDFECIKENSVKMVKDLINREGYKTFKVETKRGNKRFPMDSPEISRQLGGYILRNVPELSVDVKNPDFILYVEVREFTYIYSEIIQAVCGMPLGSNGKAVLLLSGGIDSPVAGWMIAKRGVEIEAVHFYSYPYTSERAKEKVIELTKILATYCQKINLHIVPFTEIQLEINEKCPHEELTIIMRRAMMRIAEIIANKTGALALVTGESVGQVASQTIQSLVVTNAVVSLPVFRPLIGMDKNEVVDIAKKIGTFETSILPYEDCCTVFVAKHPTTKPKLERIQLSESRLNMEELINKAVENTEVLTITRD.

Residues 61–168 form the THUMP domain; the sequence is DEALKLLSKV…EFTYIYSEII (108 aa). ATP-binding positions include 185-186, 210-211, R267, G289, and Q298; these read LL and HF.

It belongs to the ThiI family.

The protein localises to the cytoplasm. It carries out the reaction [ThiI sulfur-carrier protein]-S-sulfanyl-L-cysteine + a uridine in tRNA + 2 reduced [2Fe-2S]-[ferredoxin] + ATP + H(+) = [ThiI sulfur-carrier protein]-L-cysteine + a 4-thiouridine in tRNA + 2 oxidized [2Fe-2S]-[ferredoxin] + AMP + diphosphate. It catalyses the reaction [ThiS sulfur-carrier protein]-C-terminal Gly-Gly-AMP + S-sulfanyl-L-cysteinyl-[cysteine desulfurase] + AH2 = [ThiS sulfur-carrier protein]-C-terminal-Gly-aminoethanethioate + L-cysteinyl-[cysteine desulfurase] + A + AMP + 2 H(+). It participates in cofactor biosynthesis; thiamine diphosphate biosynthesis. Functionally, catalyzes the ATP-dependent transfer of a sulfur to tRNA to produce 4-thiouridine in position 8 of tRNAs, which functions as a near-UV photosensor. Also catalyzes the transfer of sulfur to the sulfur carrier protein ThiS, forming ThiS-thiocarboxylate. This is a step in the synthesis of thiazole, in the thiamine biosynthesis pathway. The sulfur is donated as persulfide by IscS. This chain is Probable tRNA sulfurtransferase, found in Acetivibrio thermocellus (strain ATCC 27405 / DSM 1237 / JCM 9322 / NBRC 103400 / NCIMB 10682 / NRRL B-4536 / VPI 7372) (Clostridium thermocellum).